A 474-amino-acid polypeptide reads, in one-letter code: Probable fucosyltransferase 9 (474 aa).

Residues 1-21 (MIKLTIAIATCLVLCLVLLLP) traverse the membrane as a helical; Signal-anchor for type II membrane protein segment. Topologically, residues 22 to 474 (SSNISYRHKY…LKLVDVSDEL (453 aa)) are lumenal. N-linked (GlcNAc...) asparagine glycosylation is found at N24, N39, and N208.

Belongs to the glycosyltransferase 37 family. As to expression, expressed in leaves and stems.

Its subcellular location is the golgi apparatus. It is found in the golgi stack membrane. It functions in the pathway protein modification; protein glycosylation. May be involved in cell wall biosynthesis. May act as a fucosyltransferase. This is Probable fucosyltransferase 9 (FUT9) from Arabidopsis thaliana (Mouse-ear cress).